The sequence spans 134 residues: Transcription antitermination protein NusB (134 aa).

This sequence belongs to the NusB family.

Its function is as follows. Involved in transcription antitermination. Required for transcription of ribosomal RNA (rRNA) genes. Binds specifically to the boxA antiterminator sequence of the ribosomal RNA (rrn) operons. The protein is Transcription antitermination protein NusB of Shewanella sp. (strain W3-18-1).